The primary structure comprises 191 residues: Endoribonuclease YbeY (191 aa).

Residues His-122, His-126, and His-132 each contribute to the Zn(2+) site. The segment at Gln-164 to Ile-191 is disordered. A compositionally biased stretch (basic and acidic residues) spans Ala-176–Ile-191.

The protein belongs to the endoribonuclease YbeY family. Requires Zn(2+) as cofactor.

The protein resides in the cytoplasm. Functionally, single strand-specific metallo-endoribonuclease involved in late-stage 70S ribosome quality control and in maturation of the 3' terminus of the 16S rRNA. This Corynebacterium aurimucosum (strain ATCC 700975 / DSM 44827 / CIP 107346 / CN-1) (Corynebacterium nigricans) protein is Endoribonuclease YbeY.